The primary structure comprises 121 residues: Large ribosomal subunit protein bL12 (121 aa).

It belongs to the bacterial ribosomal protein bL12 family. Homodimer. Part of the ribosomal stalk of the 50S ribosomal subunit. Forms a multimeric L10(L12)X complex, where L10 forms an elongated spine to which 2 to 4 L12 dimers bind in a sequential fashion. Binds GTP-bound translation factors.

Functionally, forms part of the ribosomal stalk which helps the ribosome interact with GTP-bound translation factors. Is thus essential for accurate translation. The chain is Large ribosomal subunit protein bL12 from Streptococcus equi subsp. equi (strain 4047).